The primary structure comprises 358 residues: Holliday junction branch migration complex subunit RuvB (358 aa).

The interval methionine 1–proline 24 is disordered. The large ATPase domain (RuvB-L) stretch occupies residues threonine 5–tyrosine 194. Residues leucine 33, arginine 34, glycine 75, lysine 78, threonine 79, threonine 80, glutamate 141 to tyrosine 143, arginine 184, tyrosine 194, and arginine 231 each bind ATP. Threonine 79 contributes to the Mg(2+) binding site. The interval serine 195–aspartate 265 is small ATPAse domain (RuvB-S). Positions proline 268–glutamate 358 are head domain (RuvB-H). Residues arginine 304, arginine 323, and arginine 328 each coordinate DNA.

This sequence belongs to the RuvB family. In terms of assembly, homohexamer. Forms an RuvA(8)-RuvB(12)-Holliday junction (HJ) complex. HJ DNA is sandwiched between 2 RuvA tetramers; dsDNA enters through RuvA and exits via RuvB. An RuvB hexamer assembles on each DNA strand where it exits the tetramer. Each RuvB hexamer is contacted by two RuvA subunits (via domain III) on 2 adjacent RuvB subunits; this complex drives branch migration. In the full resolvosome a probable DNA-RuvA(4)-RuvB(12)-RuvC(2) complex forms which resolves the HJ.

The protein localises to the cytoplasm. It catalyses the reaction ATP + H2O = ADP + phosphate + H(+). Its function is as follows. The RuvA-RuvB-RuvC complex processes Holliday junction (HJ) DNA during genetic recombination and DNA repair, while the RuvA-RuvB complex plays an important role in the rescue of blocked DNA replication forks via replication fork reversal (RFR). RuvA specifically binds to HJ cruciform DNA, conferring on it an open structure. The RuvB hexamer acts as an ATP-dependent pump, pulling dsDNA into and through the RuvAB complex. RuvB forms 2 homohexamers on either side of HJ DNA bound by 1 or 2 RuvA tetramers; 4 subunits per hexamer contact DNA at a time. Coordinated motions by a converter formed by DNA-disengaged RuvB subunits stimulates ATP hydrolysis and nucleotide exchange. Immobilization of the converter enables RuvB to convert the ATP-contained energy into a lever motion, pulling 2 nucleotides of DNA out of the RuvA tetramer per ATP hydrolyzed, thus driving DNA branch migration. The RuvB motors rotate together with the DNA substrate, which together with the progressing nucleotide cycle form the mechanistic basis for DNA recombination by continuous HJ branch migration. Branch migration allows RuvC to scan DNA until it finds its consensus sequence, where it cleaves and resolves cruciform DNA. The polypeptide is Holliday junction branch migration complex subunit RuvB (Albidiferax ferrireducens (strain ATCC BAA-621 / DSM 15236 / T118) (Rhodoferax ferrireducens)).